Consider the following 345-residue polypeptide: Phosphoribosylformylglycinamidine cyclo-ligase (345 aa).

It belongs to the AIR synthase family.

The protein localises to the cytoplasm. The enzyme catalyses 2-formamido-N(1)-(5-O-phospho-beta-D-ribosyl)acetamidine + ATP = 5-amino-1-(5-phospho-beta-D-ribosyl)imidazole + ADP + phosphate + H(+). It functions in the pathway purine metabolism; IMP biosynthesis via de novo pathway; 5-amino-1-(5-phospho-D-ribosyl)imidazole from N(2)-formyl-N(1)-(5-phospho-D-ribosyl)glycinamide: step 2/2. This is Phosphoribosylformylglycinamidine cyclo-ligase from Methylococcus capsulatus (strain ATCC 33009 / NCIMB 11132 / Bath).